The primary structure comprises 944 residues: Altered inheritance of mitochondria protein 3 (944 aa).

4 disordered regions span residues M1–N331, M349–D805, R821–E901, and S916–K944. Residues A36–K54 are compositionally biased toward basic residues. Residues S57, S58, and S64 each carry the phosphoserine modification. Over residues D59 to E69 the composition is skewed to acidic residues. Residues Y70 to K84 show a composition bias toward basic and acidic residues. Composition is skewed to low complexity over residues P93–Q105 and Q130–Y158. A compositionally biased stretch (polar residues) spans G166 to G244. Low complexity-rich tracts occupy residues Q245 to S267 and Q306 to Q318. The segment covering M349–Y362 has biased composition (polar residues). Pro residues predominate over residues G374–P390. Polar residues predominate over residues I461–A470. S471 is modified (phosphoserine). 3 stretches are compositionally biased toward basic and acidic residues: residues D483 to T497, H521 to L536, and E606 to V623. 2 stretches are compositionally biased toward low complexity: residues P625–Q640 and S664–S673. T726 is modified (phosphothreonine). Basic and acidic residues predominate over residues D746–K756. Over residues P760–T771 the composition is skewed to polar residues. The residue at position 858 (T858) is a Phosphothreonine. The span at P859–V876 shows a compositional bias: pro residues. Residues K885–L896 are compositionally biased toward basic residues.

This sequence belongs to the AIM3 family. In terms of assembly, interacts with RVS167.

The protein resides in the membrane raft. The chain is Altered inheritance of mitochondria protein 3 (AIM3) from Saccharomyces cerevisiae (strain YJM789) (Baker's yeast).